The following is a 169-amino-acid chain: Crossover junction endodeoxyribonuclease RuvC (169 aa).

Active-site residues include Asp11, Glu71, and Asp143. Residues Asp11, Glu71, and Asp143 each coordinate Mg(2+).

It belongs to the RuvC family. As to quaternary structure, homodimer which binds Holliday junction (HJ) DNA. The HJ becomes 2-fold symmetrical on binding to RuvC with unstacked arms; it has a different conformation from HJ DNA in complex with RuvA. In the full resolvosome a probable DNA-RuvA(4)-RuvB(12)-RuvC(2) complex forms which resolves the HJ. Mg(2+) is required as a cofactor.

The protein localises to the cytoplasm. The catalysed reaction is Endonucleolytic cleavage at a junction such as a reciprocal single-stranded crossover between two homologous DNA duplexes (Holliday junction).. Functionally, the RuvA-RuvB-RuvC complex processes Holliday junction (HJ) DNA during genetic recombination and DNA repair. Endonuclease that resolves HJ intermediates. Cleaves cruciform DNA by making single-stranded nicks across the HJ at symmetrical positions within the homologous arms, yielding a 5'-phosphate and a 3'-hydroxyl group; requires a central core of homology in the junction. The consensus cleavage sequence is 5'-(A/T)TT(C/G)-3'. Cleavage occurs on the 3'-side of the TT dinucleotide at the point of strand exchange. HJ branch migration catalyzed by RuvA-RuvB allows RuvC to scan DNA until it finds its consensus sequence, where it cleaves and resolves the cruciform DNA. The sequence is that of Crossover junction endodeoxyribonuclease RuvC from Rhizobium etli (strain ATCC 51251 / DSM 11541 / JCM 21823 / NBRC 15573 / CFN 42).